A 484-amino-acid chain; its full sequence is Cysteine--tRNA ligase (484 aa).

A Zn(2+)-binding site is contributed by C29. Positions 31–41 (PTVQSAPHIGH) match the 'HIGH' region motif. C219, H244, and E248 together coordinate Zn(2+). The short motif at 275 to 279 (KMSKS) is the 'KMSKS' region element. An ATP-binding site is contributed by K278.

It belongs to the class-I aminoacyl-tRNA synthetase family. As to quaternary structure, monomer. It depends on Zn(2+) as a cofactor.

The protein localises to the cytoplasm. The enzyme catalyses tRNA(Cys) + L-cysteine + ATP = L-cysteinyl-tRNA(Cys) + AMP + diphosphate. This chain is Cysteine--tRNA ligase, found in Clavibacter sepedonicus (Clavibacter michiganensis subsp. sepedonicus).